Here is a 165-residue protein sequence, read N- to C-terminus: Large ribosomal subunit protein uL10 (165 aa).

This sequence belongs to the universal ribosomal protein uL10 family. As to quaternary structure, part of the ribosomal stalk of the 50S ribosomal subunit. The N-terminus interacts with L11 and the large rRNA to form the base of the stalk. The C-terminus forms an elongated spine to which L12 dimers bind in a sequential fashion forming a multimeric L10(L12)X complex.

Forms part of the ribosomal stalk, playing a central role in the interaction of the ribosome with GTP-bound translation factors. The sequence is that of Large ribosomal subunit protein uL10 from Burkholderia mallei (strain NCTC 10229).